The primary structure comprises 402 residues: MSRVSQARSLGKYFLLVDNMLVVLGFFVVFPLISIRFVDQMGWAALMVGIALGLRQLVQQGLGIFGGAIADRFGAKPMIVTGMLMRAGGFAAMAVAHEPWVLWFSCILSGLGGTLFDPPRAALVVKLVRPHQRGRFFSILMMQDSAGAVIGALLGSWLLQYDFRLVCSAGAALFIACAAFNAWYLPAWKLSTVKTPIREGLGRVLRDKRFVTYVLTLTGYYMLAVQVMLMLPIMVNDIAGSPAAVKWMYAIEATISLTLLYPIARWSEKRFRLEHRLMAGLLVMTLAMLPIGMTSSLQQLFTLICLFYIGSIIAEPARETLGASLADARARGSYMGFSRLGLAFGGALGYAGGGWLFDAGKAVGQPERPWLMLGAIGVITFLALWWQFSPKRSASGMLEPRT.

A run of 11 helical transmembrane segments spans residues 13-33 (YFLL…FPLI), 34-54 (SIRF…ALGL), 99-116 (PWVL…GTLF), 139-159 (ILMM…SWLL), 165-185 (LVCS…AWYL), 214-234 (VLTL…LPIM), 243-263 (AAVK…LYPI), 277-297 (LMAG…TSSL), 300-320 (LFTL…ARET), 340-360 (LGLA…FDAG), and 369-389 (PWLM…WQFS).

This sequence belongs to the major facilitator superfamily. DHA1 family. MdtH (TC 2.A.1.2.21) subfamily.

The protein resides in the cell inner membrane. This is Multidrug resistance protein MdtH from Klebsiella pneumoniae subsp. pneumoniae (strain ATCC 700721 / MGH 78578).